The chain runs to 293 residues: Bifunctional protein FolD (293 aa).

NADP(+) is bound by residues 165 to 167 (GRS), Ser-190, and Ile-231.

The protein belongs to the tetrahydrofolate dehydrogenase/cyclohydrolase family. In terms of assembly, homodimer.

It carries out the reaction (6R)-5,10-methylene-5,6,7,8-tetrahydrofolate + NADP(+) = (6R)-5,10-methenyltetrahydrofolate + NADPH. The catalysed reaction is (6R)-5,10-methenyltetrahydrofolate + H2O = (6R)-10-formyltetrahydrofolate + H(+). Its pathway is one-carbon metabolism; tetrahydrofolate interconversion. In terms of biological role, catalyzes the oxidation of 5,10-methylenetetrahydrofolate to 5,10-methenyltetrahydrofolate and then the hydrolysis of 5,10-methenyltetrahydrofolate to 10-formyltetrahydrofolate. The chain is Bifunctional protein FolD from Synechococcus sp. (strain WH7803).